Reading from the N-terminus, the 392-residue chain is Chaperone protein DnaJ (392 aa).

A J domain is found at 5–75; that stretch reads DYYEVLGIDK…QKKQQYDQFG (71 aa). Residues 148–229 form a CR-type zinc finger; that stretch reads GVEKTIKYKR…CHGTGTAKET (82 aa). Residues Cys-161, Cys-164, Cys-177, Cys-180, Cys-203, Cys-206, Cys-217, and Cys-220 each contribute to the Zn(2+) site. CXXCXGXG motif repeat units lie at residues 161 to 168, 177 to 184, 203 to 210, and 217 to 224; these read CENCHGTG, CPTCNGQG, CPDCHGTG, and CKHCHGTG.

Belongs to the DnaJ family. In terms of assembly, homodimer. It depends on Zn(2+) as a cofactor.

It localises to the cytoplasm. Functionally, participates actively in the response to hyperosmotic and heat shock by preventing the aggregation of stress-denatured proteins and by disaggregating proteins, also in an autonomous, DnaK-independent fashion. Unfolded proteins bind initially to DnaJ; upon interaction with the DnaJ-bound protein, DnaK hydrolyzes its bound ATP, resulting in the formation of a stable complex. GrpE releases ADP from DnaK; ATP binding to DnaK triggers the release of the substrate protein, thus completing the reaction cycle. Several rounds of ATP-dependent interactions between DnaJ, DnaK and GrpE are required for fully efficient folding. Also involved, together with DnaK and GrpE, in the DNA replication of plasmids through activation of initiation proteins. This chain is Chaperone protein DnaJ, found in Fusobacterium nucleatum subsp. nucleatum (strain ATCC 25586 / DSM 15643 / BCRC 10681 / CIP 101130 / JCM 8532 / KCTC 2640 / LMG 13131 / VPI 4355).